Here is a 398-residue protein sequence, read N- to C-terminus: Phosphoglycerate kinase (398 aa).

Substrate contacts are provided by residues 21 to 23 (DFN), R36, 59 to 62 (HLGR), R119, and R157. Residues K208, G296, E327, and 354–357 (GGDS) each bind ATP.

The protein belongs to the phosphoglycerate kinase family. In terms of assembly, monomer.

Its subcellular location is the cytoplasm. It carries out the reaction (2R)-3-phosphoglycerate + ATP = (2R)-3-phospho-glyceroyl phosphate + ADP. It participates in carbohydrate degradation; glycolysis; pyruvate from D-glyceraldehyde 3-phosphate: step 2/5. This is Phosphoglycerate kinase from Streptococcus pyogenes serotype M3 (strain ATCC BAA-595 / MGAS315).